Reading from the N-terminus, the 726-residue chain is Ribonuclease R (726 aa).

The region spanning 264-592 (RKDLTELAFV…TVHRLLWMNL (329 aa)) is the RNB domain. The S1 motif domain occupies 645-726 (GQTFHGFISA…VQKRAILTLV (82 aa)).

The protein belongs to the RNR ribonuclease family. RNase R subfamily.

The protein resides in the cytoplasm. The enzyme catalyses Exonucleolytic cleavage in the 3'- to 5'-direction to yield nucleoside 5'-phosphates.. 3'-5' exoribonuclease that releases 5'-nucleoside monophosphates and is involved in maturation of structured RNAs. This Mycoplasma pneumoniae (strain ATCC 29342 / M129 / Subtype 1) (Mycoplasmoides pneumoniae) protein is Ribonuclease R.